The following is a 389-amino-acid chain: Lipid-A-disaccharide synthase (389 aa).

The protein belongs to the LpxB family.

The catalysed reaction is a lipid X + a UDP-2-N,3-O-bis[(3R)-3-hydroxyacyl]-alpha-D-glucosamine = a lipid A disaccharide + UDP + H(+). The protein operates within bacterial outer membrane biogenesis; LPS lipid A biosynthesis. In terms of biological role, condensation of UDP-2,3-diacylglucosamine and 2,3-diacylglucosamine-1-phosphate to form lipid A disaccharide, a precursor of lipid A, a phosphorylated glycolipid that anchors the lipopolysaccharide to the outer membrane of the cell. The sequence is that of Lipid-A-disaccharide synthase from Burkholderia vietnamiensis (strain G4 / LMG 22486) (Burkholderia cepacia (strain R1808)).